The primary structure comprises 1012 residues: Ubiquitin-activating enzyme E1 1 (1012 aa).

An ATP-binding site is contributed by arginine 22. Serine 264 is modified (phosphoserine). Residues alanine 437 and aspartate 463 each contribute to the ATP site. Residues aspartate 465 and glutamate 468 each coordinate Mg(2+). Residues asparagine 471, arginine 474, lysine 487, valine 513, aspartate 537, and asparagine 538 each contribute to the ATP site. Aspartate 537 serves as a coordination point for Mg(2+). A Glycyl lysine isopeptide (Lys-Gly) (interchain with G-Cter in ubiquitin) cross-link involves residue lysine 588. The Glycyl thioester intermediate role is filled by cysteine 593. Serine 903 carries the phosphoserine modification.

The protein belongs to the ubiquitin-activating E1 family. In terms of assembly, monomer. Interacts with the E2 ubiquitin-conjugating enzyme ubc4.

It localises to the cytoplasm. The protein resides in the nucleus. The catalysed reaction is ATP + ubiquitin + [E1 ubiquitin-activating enzyme]-L-cysteine = AMP + diphosphate + S-ubiquitinyl-[E1 ubiquitin-activating enzyme]-L-cysteine.. It participates in protein modification; protein ubiquitination. Its activity is regulated as follows. Ubiquitin transfer between the E1 ubiquitin-activating enzyme ptr3 and E2 ubiquitin-conjugating enzyme ubc4 is enhanced by the presence of magnesium and ATP, or adenylated ubiquitin. In terms of biological role, E1 ubiquitin-activating enzyme that catalyzes the first step in ubiquitin conjugation to mark cellular proteins for degradation through the ubiquitin-proteasome system. Activates ubiquitin by first adenylating its C-terminal glycine residue with ATP, and thereafter linking this residue to the side chain of a cysteine residue in E1, yielding a ubiquitin-E1 thioester and free AMP. The protein is Ubiquitin-activating enzyme E1 1 (ptr3) of Schizosaccharomyces pombe (strain 972 / ATCC 24843) (Fission yeast).